A 221-amino-acid polypeptide reads, in one-letter code: Glutathione peroxidase 6 (221 aa).

Positions 1-19 (MTQQFWGPCLFSLFMAVLA) are cleaved as a signal peptide. Residue C73 is part of the active site.

Belongs to the glutathione peroxidase family. In terms of tissue distribution, expressed in the Bowman glands.

It localises to the secreted. It catalyses the reaction 2 glutathione + H2O2 = glutathione disulfide + 2 H2O. The chain is Glutathione peroxidase 6 (Gpx6) from Rattus norvegicus (Rat).